A 170-amino-acid polypeptide reads, in one-letter code: Odorant-binding protein 2a (170 aa).

Positions 1–15 (MKTLFLGVTLGLAAA) are cleaved as a signal peptide. The cysteines at positions 74 and 166 are disulfide-linked.

The protein belongs to the calycin superfamily. Lipocalin family. In terms of assembly, monomer. In terms of tissue distribution, strongly expressed in the nasal structures, salivary and lachrymal glands, and lung. Expressed in the liver.

The protein resides in the secreted. Its function is as follows. Binds and transports small hydrophobic volatile molecules with a higher affinity for aldehydes and large fatty acids, including undecanal, palmitic acid, efficient aldehydes, benzenic aldehydes, heterocyclic aldehydes and aliphatic acids. The protein is Odorant-binding protein 2a (OBP2A) of Homo sapiens (Human).